A 218-amino-acid chain; its full sequence is Thiopurine S-methyltransferase (218 aa).

Positions 10, 45, 66, and 123 each coordinate S-adenosyl-L-methionine.

This sequence belongs to the class I-like SAM-binding methyltransferase superfamily. TPMT family.

Its subcellular location is the cytoplasm. The enzyme catalyses S-adenosyl-L-methionine + a thiopurine = S-adenosyl-L-homocysteine + a thiopurine S-methylether.. The polypeptide is Thiopurine S-methyltransferase (Shewanella amazonensis (strain ATCC BAA-1098 / SB2B)).